The chain runs to 434 residues: Histidinol dehydrogenase (434 aa).

NAD(+) contacts are provided by tyrosine 130, glutamine 188, and asparagine 211. Residues serine 237, glutamine 259, and histidine 262 each coordinate substrate. 2 residues coordinate Zn(2+): glutamine 259 and histidine 262. Active-site proton acceptor residues include glutamate 326 and histidine 327. Residues histidine 327, aspartate 360, glutamate 414, and histidine 419 each coordinate substrate. Zn(2+) is bound at residue aspartate 360. Histidine 419 is a Zn(2+) binding site.

Belongs to the histidinol dehydrogenase family. Homodimer. Zn(2+) is required as a cofactor. The cofactor is Mn(2+).

The catalysed reaction is L-histidinol + 2 NAD(+) + H2O = L-histidine + 2 NADH + 3 H(+). The protein operates within amino-acid biosynthesis; L-histidine biosynthesis; L-histidine from 5-phospho-alpha-D-ribose 1-diphosphate: step 9/9. With respect to regulation, activity is lost when the metal is removed through urea denaturation or chelation, and can be regained by addition of metal. Functionally, catalyzes the sequential NAD-dependent oxidations of L-histidinol to L-histidinaldehyde and then to L-histidine. The sequence is that of Histidinol dehydrogenase (hisD) from Salmonella typhimurium (strain LT2 / SGSC1412 / ATCC 700720).